The primary structure comprises 277 residues: Energy-coupling factor transporter transmembrane protein EcfT (277 aa).

6 helical membrane passes run 39-59 (ITILFIWAIFLANNPITYAII), 61-81 (FFCFLAIIATGLKARVFWNGV), 85-105 (IGLIFFTSLLQLFFMTGGHVF), 121-141 (AIYIFIRFTLIILISTVMTVT), 163-183 (VPVDEIALVISIALRFVPTLF), and 254-274 (SKYDLISLAYFILLVGLLLIF).

It belongs to the energy-coupling factor EcfT family. Forms a stable energy-coupling factor (ECF) transporter complex composed of 2 membrane-embedded substrate-binding proteins (S component), 2 ATP-binding proteins (A component) and 2 transmembrane proteins (T component). May be able to interact with more than 1 S component at a time.

The protein resides in the cell membrane. In terms of biological role, transmembrane (T) component of an energy-coupling factor (ECF) ABC-transporter complex. Unlike classic ABC transporters this ECF transporter provides the energy necessary to transport a number of different substrates. This is Energy-coupling factor transporter transmembrane protein EcfT from Lactobacillus helveticus (strain DPC 4571).